The sequence spans 141 residues: Cytochrome c-type biogenesis protein CcmE (141 aa).

The Cytoplasmic portion of the chain corresponds to 1–7 (MRARTRR). A helical; Signal-anchor for type II membrane protein transmembrane segment spans residues 8–28 (LYTFGIAAALIVAAAALAFFA). The Periplasmic portion of the chain corresponds to 29 to 141 (LRENANLFYT…RELKPLEAGG (113 aa)). The heme site is built by His125 and Tyr129.

This sequence belongs to the CcmE/CycJ family.

The protein resides in the cell inner membrane. Heme chaperone required for the biogenesis of c-type cytochromes. Transiently binds heme delivered by CcmC and transfers the heme to apo-cytochromes in a process facilitated by CcmF and CcmH. The polypeptide is Cytochrome c-type biogenesis protein CcmE (Hyphomonas neptunium (strain ATCC 15444)).